The chain runs to 859 residues: Collagen alpha-1(II) chain (859 aa).

The segment at 1–607 (LQGLPGKDGE…LGQTEKGPDP (607 aa)) is disordered. 2 positions are modified to 4-hydroxyproline: Pro-31 and Pro-40. Pro-42 bears the 3-hydroxyproline mark. Pro-43 and Pro-46 each carry 4-hydroxyproline. The segment covering 78 to 121 (ERGSPGAQGLQGPRGLPGTPGTDGPKGATGPAGPNGAQGPPGLQ) has biased composition (low complexity). The segment covering 136–147 (KGDRGDVGEKGP) has biased composition (basic and acidic residues). Composition is skewed to low complexity over residues 204–220 (PAGF…PGAK) and 249–277 (PTGV…AGRV). 3-hydroxyproline is present on Pro-279. Pro residues predominate over residues 279–292 (PPGPNGNPGPPGPP). 4-hydroxyproline occurs at positions 280, 286, and 292. Residues 306 to 321 (DAGPPGRAGDPGLQGP) show a composition bias toward low complexity. The span at 487–501 (RGDKGETGEAGERGL) shows a compositional bias: basic and acidic residues. Residues 491-586 (GETGEAGERG…PGPPGPPGPP (96 aa)) are triple-helical region. Pro-516 is modified (3-hydroxyproline). A compositionally biased stretch (low complexity) spans 520-529 (SGDQGAAGPA). Pro-553 carries the 4-hydroxyproline modification. Pro-558 is subject to 3-hydroxyproline. Pro-559 is modified (4-hydroxyproline). A compositionally biased stretch (pro residues) spans 570-586 (PAGPPGNPGPPGPPGPP). Residue Pro-573 is modified to 3-hydroxyproline. 4-hydroxyproline occurs at positions 574 and 577. Pro-579 is modified (3-hydroxyproline). Pro-580 and Pro-583 each carry 4-hydroxyproline. The residue at position 585 (Pro-585) is a 3-hydroxyproline. Position 586 is a 4-hydroxyproline (Pro-586). Residues 587–613 (GTGIDMSAFAGLGQTEKGPDPIRYMRA) are nonhelical region (C-terminal). Positions 614-859 (DEAAGGLRQH…GVDIGPVCFL (246 aa)) are cleaved as a propeptide — C-terminal propeptide. The Fibrillar collagen NC1 domain occupies 625–859 (VEVDATLKSL…GVDIGPVCFL (235 aa)). 3 cysteine pairs are disulfide-bonded: Cys-655–Cys-687, Cys-695–Cys-857, and Cys-765–Cys-810. Positions 673, 675, 676, 678, and 681 each coordinate Ca(2+). Asn-760 carries N-linked (GlcNAc...) asparagine glycosylation.

This sequence belongs to the fibrillar collagen family. Homotrimers of alpha 1(II) chains. Post-translationally, contains mostly 4-hydroxyproline. Prolines at the third position of the tripeptide repeating unit (G-X-P) are 4-hydroxylated in some or all of the chains. Contains 3-hydroxyproline at a few sites. This modification occurs on the first proline residue in the sequence motif Gly-Pro-Hyp, where Hyp is 4-hydroxyproline. In terms of processing, lysine residues at the third position of the tripeptide repeating unit (G-X-Y) are 5-hydroxylated in some or all of the chains. Post-translationally, O-glycosylated on hydroxylated lysine residues. The O-linked glycan consists of a Glc-Gal disaccharide.

The protein resides in the secreted. Its subcellular location is the extracellular space. It localises to the extracellular matrix. Functionally, type II collagen is specific for cartilaginous tissues. It is essential for the normal embryonic development of the skeleton, for linear growth and for the ability of cartilage to resist compressive forces. This Gallus gallus (Chicken) protein is Collagen alpha-1(II) chain.